A 361-amino-acid polypeptide reads, in one-letter code: Peptide chain release factor 1 (361 aa).

The residue at position 236 (Q236) is an N5-methylglutamine. Positions 285-309 (TAKDSARAADRKAQVGSGDRSERIR) are enriched in basic and acidic residues. Residues 285–313 (TAKDSARAADRKAQVGSGDRSERIRTYNF) are disordered.

Belongs to the prokaryotic/mitochondrial release factor family. In terms of processing, methylated by PrmC. Methylation increases the termination efficiency of RF1.

It is found in the cytoplasm. Its function is as follows. Peptide chain release factor 1 directs the termination of translation in response to the peptide chain termination codons UAG and UAA. This is Peptide chain release factor 1 from Methylorubrum populi (strain ATCC BAA-705 / NCIMB 13946 / BJ001) (Methylobacterium populi).